Here is a 648-residue protein sequence, read N- to C-terminus: NADP-dependent malic enzyme, chloroplastic (648 aa).

Residues 1-61 constitute a chloroplast transit peptide; sequence MISLNSSFLE…VDSAVRDVNA (61 aa). Tyr-195 functions as the Proton donor in the catalytic mechanism. NAD(+) is bound at residue Arg-248. The Proton acceptor role is filled by Lys-266. A divalent metal cation contacts are provided by Glu-339, Asp-340, and Asp-363. Asp-363 provides a ligand contact to NAD(+). 392–408 is an NADP(+) binding site; the sequence is LFLGAGEAGTGIAELIA. Asn-504 contributes to the NAD(+) binding site.

Belongs to the malic enzymes family. As to quaternary structure, homotetramer. Mg(2+) serves as cofactor. The cofactor is Mn(2+).

It localises to the plastid. It is found in the chloroplast. The enzyme catalyses (S)-malate + NADP(+) = pyruvate + CO2 + NADPH. The catalysed reaction is oxaloacetate + H(+) = pyruvate + CO2. Its pathway is photosynthesis; C4 acid pathway. In terms of biological role, the chloroplastic ME isoform decarboxylates malate shuttled from neighboring mesophyll cells. The CO(2) released is then refixed by ribulose-bisphosphate carboxylase. This pathway eliminates the photorespiratory loss of CO(2) that occurs in most plants. This Flaveria trinervia (Clustered yellowtops) protein is NADP-dependent malic enzyme, chloroplastic (MOD1).